Consider the following 884-residue polypeptide: Chondroitin sulfate synthase 3 (884 aa).

Residues 1 to 7 (MAVRSRR) are Cytoplasmic-facing. A helical; Signal-anchor for type II membrane protein membrane pass occupies residues 8 to 28 (PWVSVALGLVLGFTAASWLIA). Over 29-884 (PRVAELSEKR…LGVRDNRTLS (856 aa)) the chain is Lumenal. The interval 47-164 (YYGRSATGPR…NGSGDGGAAV (118 aa)) is disordered. Composition is skewed to low complexity over residues 60-69 (QQLLPQPQSR) and 84-96 (PGPQ…PGGP). 2 N-linked (GlcNAc...) asparagine glycosylation sites follow: Asn-155 and Asn-281. Residues 437–456 (SNSEVSKEDQQLGRTPSFNH) form a disordered region. Asn-712 is a glycosylation site (N-linked (GlcNAc...) asparagine). 2 residues coordinate a divalent metal cation: Asp-722 and His-836. The N-linked (GlcNAc...) asparagine glycan is linked to Asn-880.

It belongs to the chondroitin N-acetylgalactosaminyltransferase family. The cofactor is Co(2+). Mn(2+) is required as a cofactor. Cd(2+) serves as cofactor.

It localises to the golgi apparatus. Its subcellular location is the golgi stack membrane. It carries out the reaction 3-O-(beta-D-GlcA-(1-&gt;3)-beta-D-GalNAc-(1-&gt;4)-beta-D-GlcA-(1-&gt;3)-beta-D-Gal-(1-&gt;3)-beta-D-Gal-(1-&gt;4)-beta-D-Xyl)-L-seryl-[protein] + UDP-N-acetyl-alpha-D-galactosamine = 3-O-(beta-D-GalNAc-(1-&gt;4)-beta-D-GlcA-(1-&gt;3)-beta-D-GalNAc-(1-&gt;4)-beta-D-GlcA-(1-&gt;3)-beta-D-Gal-(1-&gt;3)-beta-D-Gal-(1-&gt;4)-beta-D-Xyl)-L-seryl-[protein] + UDP + H(+). It catalyses the reaction 3-O-{beta-D-GlcA-(1-&gt;3)-[beta-D-GalNAc-(1-&gt;4)-beta-D-GlcA-(1-&gt;3)](n)-beta-D-GalNAc-(1-&gt;4)-beta-D-GlcA-(1-&gt;3)-beta-D-Gal-(1-&gt;3)-beta-D-Gal-(1-&gt;4)-beta-D-Xyl}-L-seryl-[protein] + UDP-N-acetyl-alpha-D-galactosamine = 3-O-{[beta-D-GalNAc-(1-&gt;4)-beta-D-GlcA-(1-&gt;3)](n+1)-beta-D-GalNAc-(1-&gt;4)-beta-D-GlcA-(1-&gt;3)-beta-D-Gal-(1-&gt;3)-beta-D-Gal-(1-&gt;4)-beta-D-Xyl}-L-seryl-[protein] + UDP + H(+). The catalysed reaction is 3-O-(beta-D-GalNAc-(1-&gt;4)-beta-D-GlcA-(1-&gt;3)-beta-D-Gal-(1-&gt;3)-beta-D-Gal-(1-&gt;4)-beta-D-Xyl)-L-seryl-[protein] + UDP-alpha-D-glucuronate = 3-O-(beta-D-GlcA-(1-&gt;3)-beta-D-GalNAc-(1-&gt;4)-beta-D-GlcA-(1-&gt;3)-beta-D-Gal-(1-&gt;3)-beta-D-Gal-(1-&gt;4)-beta-D-Xyl)-L-seryl-[protein] + UDP + H(+). The enzyme catalyses 3-O-{[beta-D-GalNAc-(1-&gt;4)-beta-D-GlcA-(1-&gt;3)](n)-beta-D-GalNAc-(1-&gt;4)-beta-D-GlcA-(1-&gt;3)-beta-D-Gal-(1-&gt;3)-beta-D-Gal-(1-&gt;4)-beta-D-Xyl}-L-seryl-[protein] + UDP-alpha-D-glucuronate = 3-O-{beta-D-GlcA-(1-&gt;3)-[beta-D-GalNAc-(1-&gt;4)-beta-D-GlcA-(1-&gt;3)](n)-beta-D-GalNAc-(1-&gt;4)-beta-D-GlcA-(1-&gt;3)-beta-D-Gal-(1-&gt;3)-beta-D-Gal-(1-&gt;4)-beta-D-Xyl}-L-seryl-[protein] + UDP + H(+). Its function is as follows. Has both beta-1,3-glucuronic acid and beta-1,4-N-acetylgalactosamine transferase activity. Transfers glucuronic acid (GlcUA) from UDP-GlcUA and N-acetylgalactosamine (GalNAc) from UDP-GalNAc to the non-reducing end of the elongating chondroitin polymer. Specific activity is much reduced compared to CHSY1. The chain is Chondroitin sulfate synthase 3 (Chsy3) from Mus musculus (Mouse).